A 2439-amino-acid chain; its full sequence is Protein roller-3 (2439 aa).

Residues 1-26 (MLDFPRFSLFLFLLFSSFLFSSFVHA) form the signal peptide. Topologically, residues 27–1851 (ATVFSSSLKT…EEEKGGILPY (1825 aa)) are extracellular. Residues asparagine 64, asparagine 182, asparagine 334, asparagine 394, asparagine 496, asparagine 533, asparagine 657, asparagine 766, asparagine 868, asparagine 1003, asparagine 1036, asparagine 1090, and asparagine 1261 are each glycosylated (N-linked (GlcNAc...) asparagine). The Fibronectin type-III 1 domain maps to 618–720 (KPRIVAVSSI…STSNTALPDL (103 aa)). Fibronectin type-III domains lie at 1403 to 1503 (SKGI…TGFG), 1507 to 1628 (APRD…TLDV), 1629 to 1732 (PGTL…IQQA), and 1738 to 1843 (VPTA…EKEE). Asparagine 1567, asparagine 1636, asparagine 1677, and asparagine 1779 each carry an N-linked (GlcNAc...) asparagine glycan. Residues 1852–1872 (FLGISIILLLAAMILVGCFWL) form a helical membrane-spanning segment. Topologically, residues 1873–2439 (KSRRRQQMKK…GGTCRSVSQV (567 aa)) are cytoplasmic. Positions 1928-2199 (VEIVRHISDC…ATILKIFETC (272 aa)) constitute a Protein kinase domain. ATP is bound by residues 1934–1942 (ISDCSYGSV) and lysine 1963. Disordered regions lie at residues 2214 to 2277 (NEGS…RPAT), 2315 to 2348 (SQRPLSIHSEDTESTDFGGATSSMHSPSSSNRTN), and 2412 to 2439 (HLRAPTGQPPTRVNRNSSGGTCRSVSQV). 3 stretches are compositionally biased toward polar residues: residues 2216-2233 (GSDNINFNASQDSTSSRE), 2334-2347 (ATSSMHSPSSSNRT), and 2420-2439 (PPTRVNRNSSGGTCRSVSQV).

Its subcellular location is the membrane. Functionally, involved in larval development and locomotion. This is Protein roller-3 from Caenorhabditis briggsae.